The primary structure comprises 426 residues: Serine--tRNA ligase (426 aa).

233–235 (TAE) lines the L-serine pocket. ATP is bound at residue 264-266 (RSE). Position 287 (Glu-287) interacts with L-serine. 351-354 (EISS) contacts ATP. Position 387 (Ser-387) interacts with L-serine.

The protein belongs to the class-II aminoacyl-tRNA synthetase family. Type-1 seryl-tRNA synthetase subfamily. As to quaternary structure, homodimer. The tRNA molecule binds across the dimer.

It is found in the cytoplasm. It catalyses the reaction tRNA(Ser) + L-serine + ATP = L-seryl-tRNA(Ser) + AMP + diphosphate + H(+). The enzyme catalyses tRNA(Sec) + L-serine + ATP = L-seryl-tRNA(Sec) + AMP + diphosphate + H(+). The protein operates within aminoacyl-tRNA biosynthesis; selenocysteinyl-tRNA(Sec) biosynthesis; L-seryl-tRNA(Sec) from L-serine and tRNA(Sec): step 1/1. Functionally, catalyzes the attachment of serine to tRNA(Ser). Is also able to aminoacylate tRNA(Sec) with serine, to form the misacylated tRNA L-seryl-tRNA(Sec), which will be further converted into selenocysteinyl-tRNA(Sec). The protein is Serine--tRNA ligase of Pseudomonas savastanoi pv. phaseolicola (strain 1448A / Race 6) (Pseudomonas syringae pv. phaseolicola (strain 1448A / Race 6)).